The chain runs to 79 residues: Cell division protein ZapB (79 aa).

Residues 4-78 (EVFEKLEAKV…LQALLGKMEE (75 aa)) adopt a coiled-coil conformation.

It belongs to the ZapB family. As to quaternary structure, homodimer. The ends of the coiled-coil dimer bind to each other, forming polymers. Interacts with FtsZ.

Its subcellular location is the cytoplasm. Functionally, non-essential, abundant cell division factor that is required for proper Z-ring formation. It is recruited early to the divisome by direct interaction with FtsZ, stimulating Z-ring assembly and thereby promoting cell division earlier in the cell cycle. Its recruitment to the Z-ring requires functional FtsA or ZipA. The chain is Cell division protein ZapB from Cronobacter sakazakii (strain ATCC BAA-894) (Enterobacter sakazakii).